A 157-amino-acid polypeptide reads, in one-letter code: Phosphopantetheine adenylyltransferase (157 aa).

Substrate is bound at residue threonine 8. ATP contacts are provided by residues threonine 8–phenylalanine 9 and histidine 16. Substrate is bound by residues lysine 40, threonine 72, and arginine 86. Residues glycine 87–arginine 89, glutamate 97, and tyrosine 122–serine 128 contribute to the ATP site.

The protein belongs to the bacterial CoaD family. In terms of assembly, homohexamer. Mg(2+) serves as cofactor.

Its subcellular location is the cytoplasm. It carries out the reaction (R)-4'-phosphopantetheine + ATP + H(+) = 3'-dephospho-CoA + diphosphate. It functions in the pathway cofactor biosynthesis; coenzyme A biosynthesis; CoA from (R)-pantothenate: step 4/5. Reversibly transfers an adenylyl group from ATP to 4'-phosphopantetheine, yielding dephospho-CoA (dPCoA) and pyrophosphate. The chain is Phosphopantetheine adenylyltransferase from Prochlorococcus marinus (strain MIT 9312).